Here is a 384-residue protein sequence, read N- to C-terminus: Succinate--CoA ligase [ADP-forming] subunit beta (384 aa).

Residues 9-242 enclose the ATP-grasp domain; sequence KAILAQYKVP…LNEEDPLEVE (234 aa). ATP is bound by residues Lys45, 52–54, Glu98, Leu101, and Glu106; that span reads GRG. Positions 197 and 211 each coordinate Mg(2+). Residues Asn262 and 319-321 contribute to the substrate site; that span reads GIL.

The protein belongs to the succinate/malate CoA ligase beta subunit family. As to quaternary structure, heterotetramer of two alpha and two beta subunits. Requires Mg(2+) as cofactor.

The enzyme catalyses succinate + ATP + CoA = succinyl-CoA + ADP + phosphate. The catalysed reaction is GTP + succinate + CoA = succinyl-CoA + GDP + phosphate. It participates in carbohydrate metabolism; tricarboxylic acid cycle; succinate from succinyl-CoA (ligase route): step 1/1. Its function is as follows. Succinyl-CoA synthetase functions in the citric acid cycle (TCA), coupling the hydrolysis of succinyl-CoA to the synthesis of either ATP or GTP and thus represents the only step of substrate-level phosphorylation in the TCA. The beta subunit provides nucleotide specificity of the enzyme and binds the substrate succinate, while the binding sites for coenzyme A and phosphate are found in the alpha subunit. This is Succinate--CoA ligase [ADP-forming] subunit beta from Solibacter usitatus (strain Ellin6076).